A 364-amino-acid polypeptide reads, in one-letter code: MKKYKIAVLKGDGIGPEIVEQALRVLDKIGEIYGVEFEYREGLIGGEAIDKTGDPLPEETLKICKESDAILLGAVGGPKWDNLPTDKRPEKGLLRIRKELDLYANLRPAKVWDALISSSPLKEEVVKGTDMIVIRELTSGIYYGEPRGIFEENGKRYAINTMKYTEDEIRRIVRKGFEIARKRRKKLTSVDKANVLEVSALWRQIVEEEKENYPDVELEHLYIDNCAMQLVRRPTSFDVIVTGNIFGDILSDEAGVVVGSLGMLPSASIGDRYALYEPVHGSAPDIAGKGIANPIATILSAAMMLKYSFNMDKAHDLIEKAIEETLNQGYRTPDIYSEGCIKVGTKEITDKILENLERLKDAYT.

NAD(+) is bound at residue 77 to 90; sequence GPKWDNLPTDKRPE. Substrate is bound by residues Arg97, Arg107, Arg135, and Asp224. Mg(2+) contacts are provided by Asp224, Asp248, and Asp252. NAD(+) is bound at residue 281–293; it reads GSAPDIAGKGIAN.

The protein belongs to the isocitrate and isopropylmalate dehydrogenases family. LeuB type 1 subfamily. As to quaternary structure, homodimer. Requires Mg(2+) as cofactor. Mn(2+) serves as cofactor.

Its subcellular location is the cytoplasm. The catalysed reaction is (2R,3S)-3-isopropylmalate + NAD(+) = 4-methyl-2-oxopentanoate + CO2 + NADH. It participates in amino-acid biosynthesis; L-leucine biosynthesis; L-leucine from 3-methyl-2-oxobutanoate: step 3/4. Functionally, catalyzes the oxidation of 3-carboxy-2-hydroxy-4-methylpentanoate (3-isopropylmalate) to 3-carboxy-4-methyl-2-oxopentanoate. The product decarboxylates to 4-methyl-2 oxopentanoate. The chain is 3-isopropylmalate dehydrogenase (leuB) from Aquifex aeolicus (strain VF5).